A 273-amino-acid polypeptide reads, in one-letter code: Putative pyruvate, phosphate dikinase regulatory protein (273 aa).

149–156 (GPSRTSKT) provides a ligand contact to ADP.

This sequence belongs to the pyruvate, phosphate/water dikinase regulatory protein family. PDRP subfamily.

The catalysed reaction is N(tele)-phospho-L-histidyl/L-threonyl-[pyruvate, phosphate dikinase] + ADP = N(tele)-phospho-L-histidyl/O-phospho-L-threonyl-[pyruvate, phosphate dikinase] + AMP + H(+). It catalyses the reaction N(tele)-phospho-L-histidyl/O-phospho-L-threonyl-[pyruvate, phosphate dikinase] + phosphate + H(+) = N(tele)-phospho-L-histidyl/L-threonyl-[pyruvate, phosphate dikinase] + diphosphate. Functionally, bifunctional serine/threonine kinase and phosphorylase involved in the regulation of the pyruvate, phosphate dikinase (PPDK) by catalyzing its phosphorylation/dephosphorylation. In Rickettsia prowazekii (strain Madrid E), this protein is Putative pyruvate, phosphate dikinase regulatory protein.